A 359-amino-acid chain; its full sequence is Peptide chain release factor 1 (359 aa).

Glutamine 235 is modified (N5-methylglutamine).

Belongs to the prokaryotic/mitochondrial release factor family. Post-translationally, methylated by PrmC. Methylation increases the termination efficiency of RF1.

It localises to the cytoplasm. Peptide chain release factor 1 directs the termination of translation in response to the peptide chain termination codons UAG and UAA. In Verminephrobacter eiseniae (strain EF01-2), this protein is Peptide chain release factor 1.